We begin with the raw amino-acid sequence, 230 residues long: UPF0702 transmembrane protein YcaP (230 aa).

A run of 3 helical transmembrane segments spans residues 16 to 36, 48 to 68, and 75 to 95; these read FDFLGEVALRSLYTFVLVFLF, MSLFEVLIILTLGSAAGDVAF, and VPVLIVFITLALLYRLVMWLM.

It belongs to the UPF0702 family.

The protein resides in the cell membrane. The protein is UPF0702 transmembrane protein YcaP (ycaP) of Escherichia coli (strain K12).